Reading from the N-terminus, the 278-residue chain is Large ribosomal subunit protein uL2 (278 aa).

A disordered region spans residues 222–278 (GVVMNPIDHPHGGGEGRTSGGRHPVTPWGKPTKGKKTRSNKSTDKFILISRHKRKKK).

It belongs to the universal ribosomal protein uL2 family. As to quaternary structure, part of the 50S ribosomal subunit. Forms a bridge to the 30S subunit in the 70S ribosome.

In terms of biological role, one of the primary rRNA binding proteins. Required for association of the 30S and 50S subunits to form the 70S ribosome, for tRNA binding and peptide bond formation. It has been suggested to have peptidyltransferase activity; this is somewhat controversial. Makes several contacts with the 16S rRNA in the 70S ribosome. This Rhodopseudomonas palustris (strain ATCC BAA-98 / CGA009) protein is Large ribosomal subunit protein uL2.